A 629-amino-acid chain; its full sequence is Arginine--tRNA ligase (629 aa).

A 'HIGH' region motif is present at residues 128–138 (VNPTKPLHMGH).

The protein belongs to the class-I aminoacyl-tRNA synthetase family.

Its subcellular location is the cytoplasm. It catalyses the reaction tRNA(Arg) + L-arginine + ATP = L-arginyl-tRNA(Arg) + AMP + diphosphate. The chain is Arginine--tRNA ligase from Pyrococcus furiosus (strain ATCC 43587 / DSM 3638 / JCM 8422 / Vc1).